The primary structure comprises 304 residues: Acetylglutamate kinase (304 aa).

Substrate-binding positions include 77–78, Arg99, and Asn201; that span reads GG.

It belongs to the acetylglutamate kinase family. ArgB subfamily.

The protein resides in the cytoplasm. It catalyses the reaction N-acetyl-L-glutamate + ATP = N-acetyl-L-glutamyl 5-phosphate + ADP. It participates in amino-acid biosynthesis; L-arginine biosynthesis; N(2)-acetyl-L-ornithine from L-glutamate: step 2/4. Catalyzes the ATP-dependent phosphorylation of N-acetyl-L-glutamate. The polypeptide is Acetylglutamate kinase (Methylibium petroleiphilum (strain ATCC BAA-1232 / LMG 22953 / PM1)).